The primary structure comprises 567 residues: Delta(24)-sterol reductase (567 aa).

At Met-1–Arg-24 the chain is on the lumenal side. Residues Trp-25–Leu-45 form a helical; Signal-anchor membrane-spanning segment. Residues Leu-45–Ile-231 form the FAD-binding PCMH-type domain. The Cytoplasmic portion of the chain corresponds to Gly-46–Asp-567. Residues Cys-520–Arg-541 form an interaction with calmodulin region. The interval Arg-548 to Asp-567 is disordered.

Belongs to the DIMINUTO family. As to expression, highly expressed in the apical region and root tips and lower levels in immature and mature internodes and leaves.

It localises to the membrane. It catalyses the reaction lathosterol + NADP(+) = 5alpha-cholesta-7,24-dien-3beta-ol + NADPH + H(+). Its function is as follows. Plays a critical role in the general process of plant cell elongation. The protein is Delta(24)-sterol reductase (DIM) of Pisum sativum (Garden pea).